A 148-amino-acid chain; its full sequence is Transcriptional regulator MraZ (148 aa).

SpoVT-AbrB domains follow at residues 5 to 51 and 80 to 123; these read VSIL…PEPN and AETL…NAEE.

It belongs to the MraZ family. In terms of assembly, forms oligomers.

The protein resides in the cytoplasm. The protein localises to the nucleoid. The sequence is that of Transcriptional regulator MraZ from Chromobacterium violaceum (strain ATCC 12472 / DSM 30191 / JCM 1249 / CCUG 213 / NBRC 12614 / NCIMB 9131 / NCTC 9757 / MK).